A 465-amino-acid chain; its full sequence is Ribulose bisphosphate carboxylase large chain (465 aa).

At Lys4 the chain carries N6,N6,N6-trimethyllysine. Residues Asn113 and Thr163 each contribute to the substrate site. Catalysis depends on Lys165, which acts as the Proton acceptor. Lys167 contributes to the substrate binding site. Mg(2+) contacts are provided by Lys191, Asp193, and Glu194. Lys191 carries the post-translational modification N6-carboxylysine. The active-site Proton acceptor is His284. The substrate site is built by Arg285, His317, and Ser369.

It belongs to the RuBisCO large chain family. Type I subfamily. In terms of assembly, heterohexadecamer of 8 large chains and 8 small chains; disulfide-linked. The disulfide link is formed within the large subunit homodimers. Mg(2+) serves as cofactor. In terms of processing, the disulfide bond which can form in the large chain dimeric partners within the hexadecamer appears to be associated with oxidative stress and protein turnover.

It is found in the plastid. The protein resides in the chloroplast. It carries out the reaction 2 (2R)-3-phosphoglycerate + 2 H(+) = D-ribulose 1,5-bisphosphate + CO2 + H2O. It catalyses the reaction D-ribulose 1,5-bisphosphate + O2 = 2-phosphoglycolate + (2R)-3-phosphoglycerate + 2 H(+). In terms of biological role, ruBisCO catalyzes two reactions: the carboxylation of D-ribulose 1,5-bisphosphate, the primary event in carbon dioxide fixation, as well as the oxidative fragmentation of the pentose substrate in the photorespiration process. Both reactions occur simultaneously and in competition at the same active site. The chain is Ribulose bisphosphate carboxylase large chain from Idesia polycarpa (Iigiri tree).